The following is a 352-amino-acid chain: Photosystem II D2 protein (352 aa).

Threonine 2 is modified (N-acetylthreonine). Threonine 2 is subject to Phosphothreonine. Residues 40–60 (CAYMALGGWLTGTTFVTSWYT) traverse the membrane as a helical segment. Histidine 117 serves as a coordination point for chlorophyll a. A helical membrane pass occupies residues 124 to 140 (GFMLRQFEIAQSLKLRP). Pheophytin a is bound by residues glutamine 129 and asparagine 142. Residues 152 to 165 (VFVSVFLIYPLGQA) traverse the membrane as a helical segment. Histidine 197 contacts chlorophyll a. The chain crosses the membrane as a helical span at residues 207–227 (AALLCAIHGATVENTLFEDGD). A plastoquinone is bound by residues histidine 214 and phenylalanine 261. Histidine 214 contacts Fe cation. A Fe cation-binding site is contributed by histidine 268. Residues 278-294 (GLWMSAIGVVGLALNLR) form a helical membrane-spanning segment.

Belongs to the reaction center PufL/M/PsbA/D family. PSII is composed of 1 copy each of membrane proteins PsbA, PsbB, PsbC, PsbD, PsbE, PsbF, PsbH, PsbI, PsbJ, PsbK, PsbL, PsbM, PsbT, PsbX, PsbY, PsbZ, Psb30/Ycf12, at least 3 peripheral proteins of the oxygen-evolving complex and a large number of cofactors. It forms dimeric complexes. The D1/D2 heterodimer binds P680, chlorophylls that are the primary electron donor of PSII, and subsequent electron acceptors. It shares a non-heme iron and each subunit binds pheophytin, quinone, additional chlorophylls, carotenoids and lipids. There is also a Cl(-1) ion associated with D1 and D2, which is required for oxygen evolution. The PSII complex binds additional chlorophylls, carotenoids and specific lipids. serves as cofactor.

It localises to the plastid. Its subcellular location is the chloroplast thylakoid membrane. The enzyme catalyses 2 a plastoquinone + 4 hnu + 2 H2O = 2 a plastoquinol + O2. In terms of biological role, photosystem II (PSII) is a light-driven water:plastoquinone oxidoreductase that uses light energy to abstract electrons from H(2)O, generating O(2) and a proton gradient subsequently used for ATP formation. It consists of a core antenna complex that captures photons, and an electron transfer chain that converts photonic excitation into a charge separation. The D1/D2 (PsbA/PsbD) reaction center heterodimer binds P680, the primary electron donor of PSII as well as several subsequent electron acceptors. D2 is needed for assembly of a stable PSII complex. The sequence is that of Photosystem II D2 protein from Stigeoclonium helveticum (Green alga).